A 502-amino-acid chain; its full sequence is uncharacterized protein (502 aa).

Composition is skewed to low complexity over residues 1–10 (MQSTTNNNTN), 28–47 (SNRS…NNLS), and 155–171 (NTED…SVNS). Disordered stretches follow at residues 1 to 57 (MQST…VISY), 155 to 181 (NTED…LSAR), 212 to 362 (SLGN…TDKF), and 438 to 487 (TIDQ…TSNL). A compositionally biased stretch (polar residues) spans 212-230 (SLGNSERNSPDRPSTQGDS). Composition is skewed to low complexity over residues 242–290 (RNAS…SSRN) and 309–327 (SNKN…TSIK). Polar residues predominate over residues 339–348 (QTNKSKNQRG). The span at 446-460 (TSDKNNSTKSNTKYN) shows a compositional bias: low complexity. The segment covering 470 to 487 (SYGTSKRSHNRSSNTSNL) has biased composition (polar residues).

It is found in the virion. This is an uncharacterized protein from Acanthamoeba polyphaga (Amoeba).